The following is a 199-amino-acid chain: ATP-dependent Clp protease proteolytic subunit 3 (199 aa).

Residue serine 101 is the Nucleophile of the active site. Histidine 126 is an active-site residue.

The protein belongs to the peptidase S14 family. Fourteen ClpP subunits assemble into 2 heptameric rings which stack back to back to give a disk-like structure with a central cavity, resembling the structure of eukaryotic proteasomes.

It localises to the cytoplasm. The catalysed reaction is Hydrolysis of proteins to small peptides in the presence of ATP and magnesium. alpha-casein is the usual test substrate. In the absence of ATP, only oligopeptides shorter than five residues are hydrolyzed (such as succinyl-Leu-Tyr-|-NHMec, and Leu-Tyr-Leu-|-Tyr-Trp, in which cleavage of the -Tyr-|-Leu- and -Tyr-|-Trp bonds also occurs).. In terms of biological role, cleaves peptides in various proteins in a process that requires ATP hydrolysis. Has a chymotrypsin-like activity. Plays a major role in the degradation of misfolded proteins. This chain is ATP-dependent Clp protease proteolytic subunit 3, found in Synechococcus elongatus (strain ATCC 33912 / PCC 7942 / FACHB-805) (Anacystis nidulans R2).